A 297-amino-acid polypeptide reads, in one-letter code: Phosphoribosylaminoimidazole-succinocarboxamide synthase (297 aa).

The protein belongs to the SAICAR synthetase family.

The enzyme catalyses 5-amino-1-(5-phospho-D-ribosyl)imidazole-4-carboxylate + L-aspartate + ATP = (2S)-2-[5-amino-1-(5-phospho-beta-D-ribosyl)imidazole-4-carboxamido]succinate + ADP + phosphate + 2 H(+). It participates in purine metabolism; IMP biosynthesis via de novo pathway; 5-amino-1-(5-phospho-D-ribosyl)imidazole-4-carboxamide from 5-amino-1-(5-phospho-D-ribosyl)imidazole-4-carboxylate: step 1/2. This is Phosphoribosylaminoimidazole-succinocarboxamide synthase from Corynebacterium urealyticum (strain ATCC 43042 / DSM 7109).